The chain runs to 187 residues: uncharacterized protein (187 aa).

The interval 42-63 (RTNGPGKDSFSFSTSGSKPSSS) is disordered. Residues 50 to 63 (SFSFSTSGSKPSSS) are compositionally biased toward low complexity.

This is an uncharacterized protein from Saccharomyces cerevisiae (strain ATCC 204508 / S288c) (Baker's yeast).